The primary structure comprises 590 residues: Fucose-1-phosphate guanylyltransferase (590 aa).

Expressed at highest levels in brain, moderately in testis, ovary and kidney, and weakly in liver, spleen, heart and lung.

Its subcellular location is the cytoplasm. It catalyses the reaction beta-L-fucose 1-phosphate + GTP + H(+) = GDP-beta-L-fucose + diphosphate. Functionally, catalyzes the formation of GDP-L-fucose from GTP and L-fucose-1-phosphate. Functions as a salvage pathway to reutilize L-fucose arising from the turnover of glycoproteins and glycolipids. The protein is Fucose-1-phosphate guanylyltransferase of Mus musculus (Mouse).